The sequence spans 753 residues: CCR4-NOT transcription complex subunit 3 (753 aa).

The interval 240–534 is disordered; the sequence is ATSPPSHSHM…PPQFSTAPEI (295 aa). A compositionally biased stretch (low complexity) spans 257–268; it reads SSSTPTSTTSSS. Positions 284–293 are enriched in basic and acidic residues; that stretch reads DDKKRGRSTD. A Phosphothreonine modification is found at T292. Over residues 294–315 the composition is skewed to polar residues; that stretch reads SEVSQSPAKNGSKPVHSNQHPQ. At S299 the chain carries Phosphoserine. Residues 317–330 show a composition bias toward pro residues; the sequence is PAVPPTYPSGPPPA. Residues 350 to 376 show a composition bias toward low complexity; it reads PSALGPKASPAPSHNSGTPAPYAQAVA. The segment covering 396 to 408 has biased composition (gly residues); sequence SGGGGGGSGGGGS. The segment covering 424–433 has biased composition (polar residues); sequence NGATSYSSVV. Over residues 441-457 the composition is skewed to low complexity; sequence ALSSSGGNNASSQALGP. Positions 458 to 467 are enriched in pro residues; the sequence is PSGPHNPPPS. The span at 479–491 shows a compositional bias: gly residues; sequence GAGGVAPGSGNNS. S542 carries the phosphoserine modification. Residues 661-753 form a repressor domain region; the sequence is EFYQRLSTET…YRYLEDRDLQ (93 aa).

Belongs to the CNOT2/3/5 family. As to quaternary structure, component of the CCR4-NOT complex; distinct complexes seem to exist that differ in the participation of probably mutually exclusive catalytic subunits. In the complex interacts directly with CNOT2. Interacts with TIP120B and NANOS2. Interacts with EBF1. Interacts in an RNA-independent manner with BICC1 (via KH domains). As to expression, ubiquitous. Highly expressed in brain, heart, thymus, spleen, kidney, liver, small intestine, lung and peripheral blood leukocytes.

It localises to the cytoplasm. Its subcellular location is the nucleus. The protein localises to the P-body. In terms of biological role, component of the CCR4-NOT complex which is one of the major cellular mRNA deadenylases and is linked to various cellular processes including bulk mRNA degradation, miRNA-mediated repression, translational repression during translational initiation and general transcription regulation. Additional complex functions may be a consequence of its influence on mRNA expression. May be involved in metabolic regulation; may be involved in recruitment of the CCR4-NOT complex to deadenylation target mRNAs involved in energy metabolism. Involved in mitotic progression and regulation of the spindle assembly checkpoint by regulating the stability of MAD1L1 mRNA. Can repress transcription and may link the CCR4-NOT complex to transcriptional regulation; the repressive function may involve histone deacetylases. Involved in the maintenance of embryonic stem (ES) cell identity. This chain is CCR4-NOT transcription complex subunit 3, found in Homo sapiens (Human).